A 261-amino-acid chain; its full sequence is Gap junction beta-6 protein (261 aa).

Topologically, residues 1 to 22 (MDWGTLHTFIGGVNKHSTSIGK) are cytoplasmic. The chain crosses the membrane as a helical span at residues 23 to 45 (VWITVIFIFRVMILVVAAQEVWG). Over 46 to 75 (DEQEDFVCNTLQPGCKNVCYDHFFPVSHIR) the chain is Extracellular. Residues 76–98 (LWALQLIFVSTPALLVAMHVAYY) traverse the membrane as a helical segment. Residues 99–131 (RHETTRKFRRGEKRNDFKDIEDIKKQKVRIEGS) are Cytoplasmic-facing. Residues 132-154 (LWWTYTSSIFFRIIFEAAFMYVF) form a helical membrane-spanning segment. Over 155–192 (YFLYNGYHLPWVLKCGIDPCPNLVDCFISRPTEKTVFT) the chain is Extracellular. The helical transmembrane segment at 193-215 (IFMISASVICMLLNVAELCYLLL) threads the bilayer. Over 216–261 (KVCFRRSKRAQTQKNHPNHALKESKQNEMNELISDSGQNAITGFPS) the chain is Cytoplasmic.

Belongs to the connexin family. Beta-type (group I) subfamily. In terms of assembly, a connexon is composed of a hexamer of connexins. Interacts with CNST.

The protein resides in the cell membrane. The protein localises to the cell junction. Its subcellular location is the gap junction. Functionally, one gap junction consists of a cluster of closely packed pairs of transmembrane channels, the connexons, through which materials of low MW diffuse from one cell to a neighboring cell. This is Gap junction beta-6 protein (GJB6) from Homo sapiens (Human).